Consider the following 75-residue polypeptide: UPF0346 protein LEUM_0763 (75 aa).

Belongs to the UPF0346 family.

This is UPF0346 protein LEUM_0763 from Leuconostoc mesenteroides subsp. mesenteroides (strain ATCC 8293 / DSM 20343 / BCRC 11652 / CCM 1803 / JCM 6124 / NCDO 523 / NBRC 100496 / NCIMB 8023 / NCTC 12954 / NRRL B-1118 / 37Y).